Reading from the N-terminus, the 367-residue chain is 3-isopropylmalate dehydrogenase (367 aa).

Residue 75–88 (GPKWDGIERSKRPE) coordinates NAD(+). Substrate-binding residues include R95, R105, R133, and D230. Mg(2+) contacts are provided by D230, D254, and D258. Residue 288-300 (GSAPDIAGQDIAN) coordinates NAD(+).

This sequence belongs to the isocitrate and isopropylmalate dehydrogenases family. LeuB type 1 subfamily. As to quaternary structure, homodimer. Mg(2+) serves as cofactor. It depends on Mn(2+) as a cofactor.

The protein localises to the cytoplasm. The catalysed reaction is (2R,3S)-3-isopropylmalate + NAD(+) = 4-methyl-2-oxopentanoate + CO2 + NADH. It functions in the pathway amino-acid biosynthesis; L-leucine biosynthesis; L-leucine from 3-methyl-2-oxobutanoate: step 3/4. Its function is as follows. Catalyzes the oxidation of 3-carboxy-2-hydroxy-4-methylpentanoate (3-isopropylmalate) to 3-carboxy-4-methyl-2-oxopentanoate. The product decarboxylates to 4-methyl-2 oxopentanoate. The chain is 3-isopropylmalate dehydrogenase from Psychrobacter arcticus (strain DSM 17307 / VKM B-2377 / 273-4).